Here is a 479-residue protein sequence, read N- to C-terminus: Glycogen synthase (479 aa).

An ADP-alpha-D-glucose-binding site is contributed by K16.

It belongs to the glycosyltransferase 1 family. Bacterial/plant glycogen synthase subfamily.

The catalysed reaction is [(1-&gt;4)-alpha-D-glucosyl](n) + ADP-alpha-D-glucose = [(1-&gt;4)-alpha-D-glucosyl](n+1) + ADP + H(+). The protein operates within glycan biosynthesis; glycogen biosynthesis. Synthesizes alpha-1,4-glucan chains using ADP-glucose. The protein is Glycogen synthase of Lactiplantibacillus plantarum (strain ATCC BAA-793 / NCIMB 8826 / WCFS1) (Lactobacillus plantarum).